The following is a 232-amino-acid chain: Flagellar L-ring protein (232 aa).

The first 21 residues, 1–21 (MQKYALHAYPVMALMVATLTG), serve as a signal peptide directing secretion. A lipid anchor (N-palmitoyl cysteine) is attached at Cys-22. Cys-22 is lipidated: S-diacylglycerol cysteine.

Belongs to the FlgH family. The basal body constitutes a major portion of the flagellar organelle and consists of four rings (L,P,S, and M) mounted on a central rod.

Its subcellular location is the cell outer membrane. The protein localises to the bacterial flagellum basal body. Assembles around the rod to form the L-ring and probably protects the motor/basal body from shearing forces during rotation. The sequence is that of Flagellar L-ring protein from Salmonella gallinarum (strain 287/91 / NCTC 13346).